The chain runs to 264 residues: MVKSHIGSWILVLFVAMWSDVGLCKKRPKPGGGWNTGGSRYPGQGSPGGNRYPSQGGGGWGQPHGGGWGQPHGGGWGQPHGGGWGQPHGGGWGQPHGGGGWGQGGTHGQWNKPSKPKTNMKHVAGAAAAGAVVGGLGGYMLGSAMSRPLIHFGNDYEDRYYRENMYRYPNQVYYRPVDQYSNQNNFVHDCVNITVKQHTVTTTTKGENFTETDIKMMERVVEQMCITQYQRESEAYYQRGASVILFSSPPVILLISFLIFLIVG.

Positions 1 to 24 (MVKSHIGSWILVLFVAMWSDVGLC) are cleaved as a signal peptide. An interaction with GRB2, ERI3 and SYN1 region spans residues 25-241 (KKRPKPGGGW…ESEAYYQRGA (217 aa)). The interval 28–118 (PKPGGGWNTG…QWNKPSKPKT (91 aa)) is disordered. 6 repeat units span residues 54–62 (SQGGGGWGQ), 63–70 (PHGGGWGQ), 71–78 (PHGGGWGQ), 79–86 (PHGGGWGQ), 87–94 (PHGGGWGQ), and 95–103 (PHGGGGWGQ). The tract at residues 54–103 (SQGGGGWGQPHGGGWGQPHGGGWGQPHGGGWGQPHGGGWGQPHGGGGWGQ) is 6 X 8 AA tandem repeats of P-H-G-G-G-W-G-Q. Over residues 55 to 107 (QGGGGWGQPHGGGWGQPHGGGWGQPHGGGWGQPHGGGWGQPHGGGGWGQGGTH) the composition is skewed to gly residues. Cu(2+) contacts are provided by histidine 72, glycine 73, glycine 74, histidine 80, glycine 81, glycine 82, histidine 88, glycine 89, glycine 90, histidine 96, glycine 98, and glycine 99. A disulfide bridge connects residues cysteine 190 and cysteine 225. N-linked (GlcNAc...) asparagine glycans are attached at residues asparagine 192 and asparagine 208. Residue alanine 241 is the site of GPI-anchor amidated alanine attachment. A propeptide spans 242-264 (SVILFSSPPVILLISFLIFLIVG) (removed in mature form).

It belongs to the prion family. In terms of assembly, monomer and homodimer. Has a tendency to aggregate into amyloid fibrils containing a cross-beta spine, formed by a steric zipper of superposed beta-strands. Soluble oligomers may represent an intermediate stage on the path to fibril formation. Copper binding may promote oligomerization. Interacts with GRB2, APP, ERI3/PRNPIP and SYN1. Mislocalized cytosolically exposed PrP interacts with MGRN1; this interaction alters MGRN1 subcellular location and causes lysosomal enlargement. Interacts with KIAA1191.

The protein resides in the cell membrane. The protein localises to the golgi apparatus. In terms of biological role, its primary physiological function is unclear. Has cytoprotective activity against internal or environmental stresses. May play a role in neuronal development and synaptic plasticity. May be required for neuronal myelin sheath maintenance. May play a role in iron uptake and iron homeostasis. Soluble oligomers are toxic to cultured neuroblastoma cells and induce apoptosis (in vitro). Association with GPC1 (via its heparan sulfate chains) targets PRNP to lipid rafts. Also provides Cu(2+) or Zn(2+) for the ascorbate-mediated GPC1 deaminase degradation of its heparan sulfate side chains. This Tragelaphus imberbis (Lesser kudu) protein is Major prion protein (PRNP).